A 271-amino-acid polypeptide reads, in one-letter code: Tryptophan synthase alpha chain (271 aa).

Active-site proton acceptor residues include Glu-49 and Asp-60.

This sequence belongs to the TrpA family. As to quaternary structure, tetramer of two alpha and two beta chains.

The enzyme catalyses (1S,2R)-1-C-(indol-3-yl)glycerol 3-phosphate + L-serine = D-glyceraldehyde 3-phosphate + L-tryptophan + H2O. It functions in the pathway amino-acid biosynthesis; L-tryptophan biosynthesis; L-tryptophan from chorismate: step 5/5. Its function is as follows. The alpha subunit is responsible for the aldol cleavage of indoleglycerol phosphate to indole and glyceraldehyde 3-phosphate. This Rhizorhabdus wittichii (strain DSM 6014 / CCUG 31198 / JCM 15750 / NBRC 105917 / EY 4224 / RW1) (Sphingomonas wittichii) protein is Tryptophan synthase alpha chain.